The chain runs to 258 residues: Protease HtpX homolog (258 aa).

The next 2 membrane-spanning stretches (helical) occupy residues 24 to 44 (VLLFGLIYAILMVVGSILGLG) and 45 to 65 (GPLFYALLGFGVIFLQYLISP). A Zn(2+)-binding site is contributed by His-146. The active site involves Glu-147. His-150 contacts Zn(2+). 2 helical membrane-spanning segments follow: residues 157-177 (IVMTLVSAVPLICYYIFWSTV) and 186-206 (LVGIAALIAYFIGQLIVLFIS). Zn(2+) is bound at residue Glu-210.

This sequence belongs to the peptidase M48B family. The cofactor is Zn(2+).

The protein localises to the cell membrane. The polypeptide is Protease HtpX homolog (Methanothermobacter thermautotrophicus (strain ATCC 29096 / DSM 1053 / JCM 10044 / NBRC 100330 / Delta H) (Methanobacterium thermoautotrophicum)).